Here is a 51-residue protein sequence, read N- to C-terminus: Large ribosomal subunit protein bL33 (51 aa).

Positions 1–23 (MRDKIKLESSAGTGHFYTTTKNK) are disordered. Polar residues predominate over residues 10–20 (SAGTGHFYTTT).

This sequence belongs to the bacterial ribosomal protein bL33 family.

The chain is Large ribosomal subunit protein bL33 from Chromobacterium violaceum (strain ATCC 12472 / DSM 30191 / JCM 1249 / CCUG 213 / NBRC 12614 / NCIMB 9131 / NCTC 9757 / MK).